The primary structure comprises 412 residues: BSD domain-containing protein 1 (412 aa).

Positions 145-197 (WLSTFSLEERKAEISELLVSSPAIRALYTKMVPAAVAHAEFWQRYFYKVFQLE) constitute a BSD domain. The span at 208-217 (QRAEQTDHSE) shows a compositional bias: basic and acidic residues. Disordered regions lie at residues 208-227 (QRAE…EDEE), 253-272 (VTVA…ASLS), and 298-412 (ESVT…ENWE). Composition is skewed to polar residues over residues 259–272 (PESS…ASLS) and 298–308 (ESVTIRVTQPS). S308 is subject to Phosphoserine. Residues 328–349 (PEERPAPREETAREDMAQDLRV) show a composition bias toward basic and acidic residues. Over residues 353 to 372 (NSDSGKSTPSNNGKKGSSTD) the composition is skewed to polar residues. 2 stretches are compositionally biased toward acidic residues: residues 373-390 (VSED…EEEV) and 400-412 (TEEL…ENWE).

The polypeptide is BSD domain-containing protein 1 (bsdc1) (Danio rerio (Zebrafish)).